We begin with the raw amino-acid sequence, 315 residues long: Taste receptor type 2 member 3 (315 aa).

The Extracellular segment spans residues 1–5 (MGLTE). Residues 6–26 (GLFLILSGTQFALGILVNCFI) traverse the membrane as a helical segment. Residues 27 to 41 (GLVNGSSWFKTKRMS) are Cytoplasmic-facing. A helical membrane pass occupies residues 42–62 (LSDFIITTLAFLRIILLCIIL). Residues 63-93 (TDSFLIEFSPNAHDSGVIMQIIDVSWTFTNH) are Extracellular-facing. A helical membrane pass occupies residues 94–114 (LSIWLATCLGVLYCLKIASFS). The Cytoplasmic portion of the chain corresponds to 115–127 (HPTFLWLKWRVSR). A helical membrane pass occupies residues 128–148 (VMVWMLLGVLLLSCGSTASLI). The Extracellular portion of the chain corresponds to 149–185 (NEFKLYSVFRGIEATXNVTEHFRKKRSEYYLIHVLGT). An N-linked (GlcNAc...) asparagine glycan is attached at Asn165. Residues 186-206 (LWYLPPLIVSLAAYFLLIFSL) form a helical membrane-spanning segment. Residues 207-233 (GRHTRQMLQNGTSSRDPSTEAHKRAIR) are Cytoplasmic-facing. Residues 234–254 (IILSSFFLFLLYFLAFLIASF) traverse the membrane as a helical segment. Residues 255-265 (GNFLPKTKMAK) lie on the Extracellular side of the membrane. The helical transmembrane segment at 266–286 (MIGEVMTMFYPAGHSFILILG) threads the bilayer. At 287–315 (NSKLKQTFVEMLRCESGHLKPGSKGPIFS) the chain is on the cytoplasmic side.

This sequence belongs to the G-protein coupled receptor T2R family.

Its subcellular location is the membrane. Its function is as follows. Gustducin-coupled receptor implicated in the perception of bitter compounds in the oral cavity and the gastrointestinal tract. Signals through PLCB2 and the calcium-regulated cation channel TRPM5. This chain is Taste receptor type 2 member 3 (TAS2R3), found in Pongo pygmaeus (Bornean orangutan).